The following is a 465-amino-acid chain: MTSMASLFSFTSPAVKRLLGWKQGDEEEKWAEKAVDALVKKLKKKKGAMEELEKALSSPGQPSKCVTIPRSLDGRLQVSHRKGLPHVIYCRVWRWPDLQSHHELKPLDICEFPFGSKQKEVCINPYHYKRVESPVLPPVLVPRHNEFNPQHSLLVQFRNLSHNEPHMPQNATFPDSFHQPNNTPFPLSPNSPYPPSPASSTYPNSPASSGPGSPFQLPADTPPPAYMPPDDQMGQDNSQPMDTSNNMIPQIMPSISSRDVQPVAYEEPKHWCSIVYYELNNRVGEAFHASSTSVLVDGFTDPSNNKSRFCLGLLSNVNRNSTIENTRRHIGKGVHLYYVGGEVYAECLSDSSIFVQSRNCNFHHGFHPTTVCKIPSSCSLKIFNNQEFAQLLAQSVNHGFEAVYELTKMCTIRMSFVKGWGAEYHRQDVTSTPCWIEIHLHGPLQWLDKVLTQMGSPLNPISSVS.

T2 is modified (N-acetylthreonine). The MH1 domain maps to 13-137; that stretch reads PAVKRLLGWK…YKRVESPVLP (125 aa). Positions 65, 110, 122, and 127 each coordinate Zn(2+). The disordered stretch occupies residues 163-249; it reads NEPHMPQNAT…PMDTSNNMIP (87 aa). The span at 169-182 shows a compositional bias: polar residues; the sequence is QNATFPDSFHQPNN. Residues 186 to 197 show a composition bias toward pro residues; that stretch reads PLSPNSPYPPSP. Low complexity predominate over residues 198-214; sequence ASSTYPNSPASSGPGSP. The segment covering 234 to 249 has biased composition (polar residues); sequence GQDNSQPMDTSNNMIP. In terms of domain architecture, MH2 spans 271–465; it reads WCSIVYYELN…SPLNPISSVS (195 aa). Phosphoserine is present on residues S463 and S465.

The protein belongs to the dwarfin/SMAD family. As to quaternary structure, homodimer. Forms trimers with the co-SMAD SMAD4. Interacts with PEBP2-alpha subunit and SMURF1. Interacts with SUV39H1 and SUV39H2. Interacts (via MH2 domain) with LEMD3. Interacts with WWP1. Interacts with TMEM119. Interacts with ZNF8. Interacts with RANBP3L. Interacts with HK1. Interacts with HGS; this interaction attenuates BMP signaling. In terms of processing, phosphorylated on serine by BMP (bone morphogenetic proteins) type 1 receptor kinase. Ubiquitin-mediated proteolysis by SMAD-specific E3 ubiquitin ligase SMURF1. In terms of tissue distribution, ubiquitous.

It is found in the cytoplasm. The protein localises to the nucleus. The protein resides in the mitochondrion. Functionally, transcriptional regulator that plays a role in various cellular processes including embryonic development, cell differentiation, angiogenesis and tissue homeostasis. Upon BMP ligand binding to their receptors at the cell surface, is phosphorylated by activated type I BMP receptors (BMPRIs) and associates with SMAD4 to form a heteromeric complex which translocates into the nucleus acting as transcription factor. In turn, the hetero-trimeric complex recognizes cis-regulatory elements containing Smad Binding Elements (SBEs) to modulate the outcome of the signaling network. Non-phosphorylated SMAD5 has a cytoplasmic role in energy metabolism regulation by promoting mitochondrial respiration and glycolysis in response to cytoplasmic pH changes. Mechanistically, interacts with hexokinase 1/HK1 and thereby accelerates glycolysis. The protein is Mothers against decapentaplegic homolog 5 (SMAD5) of Homo sapiens (Human).